The chain runs to 200 residues: NADH-quinone oxidoreductase subunit C (200 aa).

Belongs to the complex I 30 kDa subunit family. As to quaternary structure, NDH-1 is composed of 14 different subunits. Subunits NuoB, C, D, E, F, and G constitute the peripheral sector of the complex.

Its subcellular location is the cell inner membrane. It carries out the reaction a quinone + NADH + 5 H(+)(in) = a quinol + NAD(+) + 4 H(+)(out). In terms of biological role, NDH-1 shuttles electrons from NADH, via FMN and iron-sulfur (Fe-S) centers, to quinones in the respiratory chain. The immediate electron acceptor for the enzyme in this species is believed to be ubiquinone. Couples the redox reaction to proton translocation (for every two electrons transferred, four hydrogen ions are translocated across the cytoplasmic membrane), and thus conserves the redox energy in a proton gradient. This Parvibaculum lavamentivorans (strain DS-1 / DSM 13023 / NCIMB 13966) protein is NADH-quinone oxidoreductase subunit C.